A 249-amino-acid polypeptide reads, in one-letter code: MTEHSRDTPQFYLTAPSPCPYLPGKEERKVFTHLVGERAGALNDVLTQGGFRRSQSIAYRPACEGCRACISVRICVDDFVPSRSFRRTLKENEDLIGALRPPSPTSEQYGLFRSYVTSRHGSGGMADMSVLDYAMMVEDTHVQTRLVEYRRRGPDSRINGRGTGDLFAVALTDILGDGLSMVYSFYNPNIPERSLGTFLILDHIAKAKEMGMPYVYLGYWVNGSRKMDYKRRFLPQERLSPHGWERVDE.

The protein belongs to the R-transferase family. Bpt subfamily.

It localises to the cytoplasm. It carries out the reaction N-terminal L-glutamyl-[protein] + L-leucyl-tRNA(Leu) = N-terminal L-leucyl-L-glutamyl-[protein] + tRNA(Leu) + H(+). The catalysed reaction is N-terminal L-aspartyl-[protein] + L-leucyl-tRNA(Leu) = N-terminal L-leucyl-L-aspartyl-[protein] + tRNA(Leu) + H(+). Functionally, functions in the N-end rule pathway of protein degradation where it conjugates Leu from its aminoacyl-tRNA to the N-termini of proteins containing an N-terminal aspartate or glutamate. The chain is Aspartate/glutamate leucyltransferase from Azorhizobium caulinodans (strain ATCC 43989 / DSM 5975 / JCM 20966 / LMG 6465 / NBRC 14845 / NCIMB 13405 / ORS 571).